We begin with the raw amino-acid sequence, 951 residues long: PE-PGRS family protein PE_PGRS3 (951 aa).

The region spanning 4–94 (VIAAPEVIAA…GAYAAAEAAA (91 aa)) is the PE domain. Basic residues predominate over residues 887–919 (CRRQRRADRQRRQRRQRRQSRGHARCRRHRRAA). The disordered stretch occupies residues 887–951 (CRRQRRADRQ…GISCSPQMMP (65 aa)).

This sequence belongs to the mycobacterial PE family. PGRS subfamily.

It localises to the cell outer membrane. It is found in the secreted. Its subcellular location is the cell wall. The protein localises to the cell surface. The arginine-rich C-terminal region protrudes from the mycobacterial membrane and mediates M.tuberculosis entry into host epithelial cells. May serve as a bridge between mycobacteria and host cells by interacting with specific host phospholipids and extracting them from host cells, for their direct integration or as a source of phosphate, during phases of TB pathogenesis when M.tuberculosis is short of phosphate supply. This is PE-PGRS family protein PE_PGRS3 (PE_PGRS3) from Mycobacterium tuberculosis (strain CDC 1551 / Oshkosh).